The sequence spans 525 residues: Probable histidine ammonia-lyase (525 aa).

Residues 145–147 (ASG) constitute a cross-link (5-imidazolinone (Ala-Gly)). Position 146 is a 2,3-didehydroalanine (Ser) (Ser146).

This sequence belongs to the PAL/histidase family. In terms of processing, contains an active site 4-methylidene-imidazol-5-one (MIO), which is formed autocatalytically by cyclization and dehydration of residues Ala-Ser-Gly.

Its subcellular location is the cytoplasm. The enzyme catalyses L-histidine = trans-urocanate + NH4(+). It functions in the pathway amino-acid degradation; L-histidine degradation into L-glutamate; N-formimidoyl-L-glutamate from L-histidine: step 1/3. The protein is Probable histidine ammonia-lyase of Halobacterium salinarum (strain ATCC 29341 / DSM 671 / R1).